Reading from the N-terminus, the 272-residue chain is MISIDQRAMQAKPIDLEHLSAQDTALEIRNLDLSYGDKQALFNVSMKIPKKQVTAFIGPSGCGKSTLLRCINRMNDLVDSCKIKGEILLHGQNIYDKKVDVAALRRNVGMVFQRPNPFPKSIYENVVYGLRLQGLNNRRDLDEAAERSLRGAAIWDEVKDRLHDNAFGLSGGQQQRLVIARAIAIEPEVLLLDEPTSALDPISTLTIEELITELKDKYTVVIVTHNMQQAARVSDQTAFMYMGELVEYADTNTIFTTPRKRKTEDYITGRYG.

Positions 26–267 (LEIRNLDLSY…PRKRKTEDYI (242 aa)) constitute an ABC transporter domain. 58–65 (GPSGCGKS) contributes to the ATP binding site.

It belongs to the ABC transporter superfamily. Phosphate importer (TC 3.A.1.7) family. As to quaternary structure, the complex is composed of two ATP-binding proteins (PstB), two transmembrane proteins (PstC and PstA) and a solute-binding protein (PstS).

Its subcellular location is the cell inner membrane. It catalyses the reaction phosphate(out) + ATP + H2O = ADP + 2 phosphate(in) + H(+). Functionally, part of the ABC transporter complex PstSACB involved in phosphate import. Responsible for energy coupling to the transport system. This chain is Phosphate import ATP-binding protein PstB, found in Shewanella denitrificans (strain OS217 / ATCC BAA-1090 / DSM 15013).